The following is a 408-amino-acid chain: G2/mitotic-specific cyclin-B (408 aa).

This sequence belongs to the cyclin family. Cyclin AB subfamily. In terms of assembly, interacts with the CDC2 protein kinase to form a serine/threonine kinase holoenzyme complex also known as maturation promoting factor (MPF). The cyclin subunit imparts substrate specificity to the complex.

Essential for the control of the cell cycle at the G2/M (mitosis) transition. This is G2/mitotic-specific cyclin-B from Patella vulgata (Common limpet).